A 734-amino-acid chain; its full sequence is Photosystem I P700 chlorophyll a apoprotein A2 (734 aa).

Transmembrane regions (helical) follow at residues 46–69 (IFAS…FHVA), 135–158 (LYTG…LHLQ), 175–199 (LNHH…HVAI), 273–291 (IAHH…GHMY), 330–353 (LHFQ…QHMY), 369–395 (AALY…IFFI), 417–439 (AIIS…LYVH), and 517–535 (FLVH…LILV). [4Fe-4S] cluster contacts are provided by Cys-559 and Cys-568. The next 2 membrane-spanning stretches (helical) occupy residues 575–596 (AFYL…YWHW) and 643–665 (LSVW…MFLI). Chlorophyll a is bound by residues His-654, Met-662, and Tyr-670. Trp-671 contacts phylloquinone. The helical transmembrane segment at 707-727 (LVGLAHFSVGYIFTYAAFLIA) threads the bilayer.

Belongs to the PsaA/PsaB family. The PsaA/B heterodimer binds the P700 chlorophyll special pair and subsequent electron acceptors. PSI consists of a core antenna complex that captures photons, and an electron transfer chain that converts photonic excitation into a charge separation. The eukaryotic PSI reaction center is composed of at least 11 subunits. P700 is a chlorophyll a/chlorophyll a' dimer, A0 is one or more chlorophyll a, A1 is one or both phylloquinones and FX is a shared 4Fe-4S iron-sulfur center. serves as cofactor.

The protein localises to the plastid. Its subcellular location is the chloroplast thylakoid membrane. It catalyses the reaction reduced [plastocyanin] + hnu + oxidized [2Fe-2S]-[ferredoxin] = oxidized [plastocyanin] + reduced [2Fe-2S]-[ferredoxin]. In terms of biological role, psaA and PsaB bind P700, the primary electron donor of photosystem I (PSI), as well as the electron acceptors A0, A1 and FX. PSI is a plastocyanin-ferredoxin oxidoreductase, converting photonic excitation into a charge separation, which transfers an electron from the donor P700 chlorophyll pair to the spectroscopically characterized acceptors A0, A1, FX, FA and FB in turn. Oxidized P700 is reduced on the lumenal side of the thylakoid membrane by plastocyanin. The sequence is that of Photosystem I P700 chlorophyll a apoprotein A2 from Psilotum nudum (Whisk fern).